Consider the following 280-residue polypeptide: Probable endonuclease 4 (280 aa).

Positions 69, 109, 145, 179, 182, 216, 229, 231, and 261 each coordinate Zn(2+).

Belongs to the AP endonuclease 2 family. Zn(2+) serves as cofactor.

It carries out the reaction Endonucleolytic cleavage to 5'-phosphooligonucleotide end-products.. Functionally, endonuclease IV plays a role in DNA repair. It cleaves phosphodiester bonds at apurinic or apyrimidinic (AP) sites, generating a 3'-hydroxyl group and a 5'-terminal sugar phosphate. The sequence is that of Probable endonuclease 4 from Photorhabdus laumondii subsp. laumondii (strain DSM 15139 / CIP 105565 / TT01) (Photorhabdus luminescens subsp. laumondii).